Reading from the N-terminus, the 153-residue chain is Ribosomal RNA large subunit methyltransferase H (153 aa).

Residues Leu75, Gly102, and 121–126 contribute to the S-adenosyl-L-methionine site; that span reads LSPLTM.

It belongs to the RNA methyltransferase RlmH family. As to quaternary structure, homodimer.

The protein localises to the cytoplasm. It carries out the reaction pseudouridine(1915) in 23S rRNA + S-adenosyl-L-methionine = N(3)-methylpseudouridine(1915) in 23S rRNA + S-adenosyl-L-homocysteine + H(+). Functionally, specifically methylates the pseudouridine at position 1915 (m3Psi1915) in 23S rRNA. This is Ribosomal RNA large subunit methyltransferase H from Nitratiruptor sp. (strain SB155-2).